We begin with the raw amino-acid sequence, 1091 residues long: MSMLLGVRGTRDQSSYIGGRDYVFWQKEMRDAERIPGPTPLPVVGNLFDIDLEHVLQSVIGLANKYGPLFQITINGEKQIFATSQALVDELCDESRFHKAVASGLENLRMLAHDGLFTAYHGERGWGIAHRILVPAFGPLRIQSMFDDMGDLAQQLCLKWARQGASNSINITDDFTRLTLDTIALCTMDFRLNSFYNNDTMHPFVESMLYVLREADVQSALPGIANSVRIMAHRRMLKNIEAMRTIARDIIHDRRKKENPADDLLNTLLNGRDPVTGEGMSDESIIDNVITFLVAGHETTSGLLSFTFYYLVQHPDILKKAQKEVDETVGQAQISVQHLAELPYIDAILKESLRMMPTAPGFTVTPKKAETLGGKWLLNAGQPINVLLPACLRDRSIFGPNADEFSPGRMLAENFSKLPPNSWKPFGNGERSCIGRAFAWQEAQLVVAMILQNFDLVPDDPSYTLRIKETLTIKPDGFRVRATLRHRQTATGLFQHTLSARNDTSLASSSAHFIKKSEDQAPAGGRPICFFYGSNSGTCKALAHRLASDLMPYGFTDQKLAVLDTAVDNLPRDQPVIILTTTYDGQPTDDAKKFVAWLESGKVPALQGISYAVFGCGHHDWTQTFYRIPTLIDELMHKAGATRLAPRGTANAAVSDLFSDLEAWEETSLLPALRETFLLSSSSDLEPLNLHQLQISLSKPRRIDLHKDLMEARVTTVRILTNPDTPEKRHIEFRFQGDTTLRPGDHVNVLPVNPPSTVLRVLAQFNLAPDYSITINSFNTLGLPQATPVSASELFSAYVELSQPATRNNLRILAATAQSDEDKQELIHLQDSYDSLVRDKRVSVLDLLEQFPSVSLPIAAFISMLPALRLRTYSLSLAPSFKPSHGSLTFSVVNEPARNGNRRYLGVGSNYLASLTPGSILYLSPRPAKEAFHLPVDQSRIPIIMICAGSGLAPFLSFIQDRMIWQQQDKPLARALLFFGCGGRFLDDLYHEELSEFEAAGVVDVRRAYSKVLDYDMARGCKYVQDRLVAEANAIRHLWAQDATIYVCGSADMAKGVEGVLEKLLGMLPRERYVTEIYQMQTRDNVSEWLI.

Cys433 contacts heme. The Flavodoxin-like domain occupies 528-669 (ICFFYGSNSG…DLEAWEETSL (142 aa)). Residues 534-538 (SNSGT) and 613-645 (VFGC…TRLA) each bind FMN. The region spanning 707 to 935 (KDLMEARVTT…RPAKEAFHLP (229 aa)) is the FAD-binding FR-type domain.

This sequence in the N-terminal section; belongs to the cytochrome P450 family. Requires FAD as cofactor. FMN serves as cofactor. Heme is required as a cofactor.

It catalyses the reaction 2 oxidized [cytochrome P450] + NADPH = 2 reduced [cytochrome P450] + NADP(+) + H(+). The enzyme catalyses an organic molecule + reduced [NADPH--hemoprotein reductase] + O2 = an alcohol + oxidized [NADPH--hemoprotein reductase] + H2O + H(+). It carries out the reaction dodecanoate + reduced [NADPH--hemoprotein reductase] + O2 = 5-hydroxydodecanoate + oxidized [NADPH--hemoprotein reductase] + H2O + H(+). The catalysed reaction is tetradecanoate + reduced [NADPH--hemoprotein reductase] + O2 = 7-hydroxytetradecanoate + oxidized [NADPH--hemoprotein reductase] + H2O + H(+). It catalyses the reaction dodecan-1-ol + reduced [NADPH--hemoprotein reductase] + O2 = 1,5-dodecanediol + oxidized [NADPH--hemoprotein reductase] + H2O + H(+). The enzyme catalyses dodecan-1-ol + reduced [NADPH--hemoprotein reductase] + O2 = 1,4-dodecanediol + oxidized [NADPH--hemoprotein reductase] + H2O + H(+). It carries out the reaction dodecan-1-ol + reduced [NADPH--hemoprotein reductase] + O2 = 1,6-dodecanediol + oxidized [NADPH--hemoprotein reductase] + H2O + H(+). Its function is as follows. Self-sufficient cytochrome P450 monooxygenase that catalyzes the regioselective in-chain hydroxylation of alkanes, fatty alcohols, and fatty acids at the omega-7 position. Performs hydroxylation of C10-C16 n-alkanes and C12 and C14 fatty alcohols; and thereby enables the one step biocatalytic synthesis of rare alcohols such as 5-dodecanol and 7-tetradecanol. Converts 1-dodecanol into 1,5-dodecanediol as major product with very little sub-terminally hydroxylated products with the 1,4-dodecanediol and 1,6-dodecanediol more abundant. Converts dodecanoic acid to 5-hydroxydodecanoic acid which can be further converted into delta-dodecalactone by lactonization of the 5-hydroxy acid at low pH. Also gives sub-terminal hydroxylation of dodecanoic acid with 9-hydroxydodecanoic acid being the second most abundant product. This is Self-sufficient cytochrome P450 monooxygenase CYP505E1 from Aspergillus niger (strain ATCC MYA-4892 / CBS 513.88 / FGSC A1513).